A 1558-amino-acid polypeptide reads, in one-letter code: Hybrid PKS-NRPS synthetase TAS1 (1558 aa).

The condensation (C) domain stretch occupies residues 27-392 (YPMTKAQESL…RGLETPRAQV (366 aa)). The tract at residues 522–919 (TYKELNERSN…TITDVMPEVT (398 aa)) is adenylation (A) domain. Positions 995–1028 (TSGSSSSATPSLVSSGSTTCRSPSTSSCSDSRSA) are disordered. The Carrier domain occupies 1027–1104 (SASPAITSAV…GQVDLLCGSE (78 aa)). Position 1063 is an O-(pantetheine 4'-phosphoryl)serine (Ser-1063). The interval 1116 to 1144 (LGRGRTKSPAKIVDSQGRSSPSTIPSGGR) is disordered. Residues 1131–1140 (QGRSSPSTIP) show a composition bias toward polar residues. The Ketosynthase family 3 (KS3) domain occupies 1145-1558 (KSEIAIVGIS…GVNAHCVLRS (414 aa)). Residues Cys-1308, His-1444, and Asn-1484 each act as for beta-ketoacyl synthase activity in the active site.

It in the N-terminal section; belongs to the NRP synthetase family. It depends on pantetheine 4'-phosphate as a cofactor.

The enzyme catalyses acetoacetyl-CoA + L-isoleucine + ATP = tenuazonic acid + AMP + diphosphate + CoA + 2 H(+). Its function is as follows. Hybrid PKS-NRPS synthetase that mediates the biosynthesis of the toxin tenuazonic acid (TeA), an inhibitor of protein biosynthesis on ribosomes by suppressing the release of new protein. TAS1 alone is sufficient for TeA synthesis via the condensation of isoleucine (Ile) with acetoacetyl-CoA by the N-terminal NRPS module and subsequent cyclization conducted by the C-terminal KS domain. This is Hybrid PKS-NRPS synthetase TAS1 from Gloeophyllum trabeum (strain ATCC 11539 / FP-39264 / Madison 617) (Brown rot fungus).